A 404-amino-acid chain; its full sequence is Cysteine desulfurase IscS (404 aa).

Pyridoxal 5'-phosphate-binding positions include 75 to 76 (AT), Asn-155, Gln-183, and 203 to 205 (TGH). Lys-206 carries the N6-(pyridoxal phosphate)lysine modification. Position 243 (Thr-243) interacts with pyridoxal 5'-phosphate. Cys-328 acts as the Cysteine persulfide intermediate in catalysis. Cys-328 is a [2Fe-2S] cluster binding site.

This sequence belongs to the class-V pyridoxal-phosphate-dependent aminotransferase family. NifS/IscS subfamily. Homodimer. Forms a heterotetramer with IscU, interacts with other sulfur acceptors. Pyridoxal 5'-phosphate is required as a cofactor.

The protein localises to the cytoplasm. The catalysed reaction is (sulfur carrier)-H + L-cysteine = (sulfur carrier)-SH + L-alanine. Its pathway is cofactor biosynthesis; iron-sulfur cluster biosynthesis. Functionally, master enzyme that delivers sulfur to a number of partners involved in Fe-S cluster assembly, tRNA modification or cofactor biosynthesis. Catalyzes the removal of elemental sulfur atoms from cysteine to produce alanine. Functions as a sulfur delivery protein for Fe-S cluster synthesis onto IscU, an Fe-S scaffold assembly protein, as well as other S acceptor proteins. The chain is Cysteine desulfurase IscS from Enterobacter sp. (strain 638).